Reading from the N-terminus, the 439-residue chain is Serine--tRNA ligase (439 aa).

237–239 (TAE) is a binding site for L-serine. 268–270 (RAE) serves as a coordination point for ATP. L-serine is bound at residue Glu-291. 362–365 (EISS) provides a ligand contact to ATP. Residue Ser-397 participates in L-serine binding.

This sequence belongs to the class-II aminoacyl-tRNA synthetase family. Type-1 seryl-tRNA synthetase subfamily. Homodimer. The tRNA molecule binds across the dimer.

It is found in the cytoplasm. It carries out the reaction tRNA(Ser) + L-serine + ATP = L-seryl-tRNA(Ser) + AMP + diphosphate + H(+). It catalyses the reaction tRNA(Sec) + L-serine + ATP = L-seryl-tRNA(Sec) + AMP + diphosphate + H(+). It participates in aminoacyl-tRNA biosynthesis; selenocysteinyl-tRNA(Sec) biosynthesis; L-seryl-tRNA(Sec) from L-serine and tRNA(Sec): step 1/1. Its function is as follows. Catalyzes the attachment of serine to tRNA(Ser). Is also able to aminoacylate tRNA(Sec) with serine, to form the misacylated tRNA L-seryl-tRNA(Sec), which will be further converted into selenocysteinyl-tRNA(Sec). This Afipia carboxidovorans (strain ATCC 49405 / DSM 1227 / KCTC 32145 / OM5) (Oligotropha carboxidovorans) protein is Serine--tRNA ligase.